Here is a 526-residue protein sequence, read N- to C-terminus: MLO-like protein 1 (526 aa).

Residues 1–11 (MGHGGEGMSLE) are Extracellular-facing. Residues 12–32 (FTPTWVVAGVCTVIVAISLAV) form a helical membrane-spanning segment. At 33-61 (ERLLHYFGTVLKKKKQKPLYEALQKVKEE) the chain is on the cytoplasmic side. Residues 62 to 82 (LMLLGFISLLLTVFQGLISKF) form a helical membrane-spanning segment. At 83-160 (CVKENVLMHM…LSLEALHHLH (78 aa)) the chain is on the extracellular side. A helical membrane pass occupies residues 161–181 (IFIFVLAISHVTFCVLTVIFG). Over 182-287 (STRIHQWKKW…MRALEDDFKQ (106 aa)) the chain is Cytoplasmic. 2 helical membrane-spanning segments follow: residues 288–308 (VVGI…LNVN) and 309–329 (GWHT…AVGT). The Cytoplasmic portion of the chain corresponds to 330–372 (KLEHVIAQLAHEVAEKHVAIEGDLVVKPSDEHFWFSKPQIVLY). A helical membrane pass occupies residues 373 to 393 (LIHFILFQNAFEIAFFFWIWV). Topologically, residues 394–412 (TYGFDSCIMGQVRYIVPRL) are extracellular. Residues 413–433 (VIGVFIQVLCSYSTLPLYAIV) form a helical membrane-spanning segment. The Cytoplasmic portion of the chain corresponds to 434-526 (SQMGSSFKKA…NNEITPDHNN (93 aa)). Residues 447–468 (ENVQVGLVGWAQKVKQKRDLKA) form a calmodulin-binding region. A disordered region spans residues 471-526 (SNGDEGSSQAGPGPDSGSGSAPAAGPGAGFAGIQLSRVTRNNAGDTNNEITPDHNN). Residues 476 to 495 (GSSQAGPGPDSGSGSAPAAG) are compositionally biased toward low complexity. Polar residues predominate over residues 506–520 (SRVTRNNAGDTNNEI).

Belongs to the MLO family.

Its subcellular location is the cell membrane. May be involved in modulation of pathogen defense and leaf cell death. Activity seems to be regulated by Ca(2+)-dependent calmodulin binding and seems not to require heterotrimeric G proteins. The chain is MLO-like protein 1 (MLO1) from Arabidopsis thaliana (Mouse-ear cress).